A 283-amino-acid polypeptide reads, in one-letter code: Undecaprenyl-diphosphatase (283 aa).

7 helical membrane passes run 46–66 (PGVS…IAYF), 95–115 (VAMV…KFFW), 127–147 (VPSI…AECM), 154–174 (LGGV…LAVI), 200–220 (FSFL…LKSA), 227–247 (AGPL…WLAI), and 259–279 (TWIF…WWAF).

This sequence belongs to the UppP family.

The protein localises to the cell inner membrane. It catalyses the reaction di-trans,octa-cis-undecaprenyl diphosphate + H2O = di-trans,octa-cis-undecaprenyl phosphate + phosphate + H(+). Catalyzes the dephosphorylation of undecaprenyl diphosphate (UPP). Confers resistance to bacitracin. In Synechococcus sp. (strain CC9902), this protein is Undecaprenyl-diphosphatase.